Consider the following 107-residue polypeptide: Nucleoid-associated protein Atu0095 (107 aa).

The tract at residues 81-107 is disordered; it reads KGEAQAQEKMADLTAGLPLPPGMKLPF. Pro residues predominate over residues 98–107; it reads PLPPGMKLPF.

Belongs to the YbaB/EbfC family. In terms of assembly, homodimer.

Its subcellular location is the cytoplasm. It localises to the nucleoid. Its function is as follows. Binds to DNA and alters its conformation. May be involved in regulation of gene expression, nucleoid organization and DNA protection. The chain is Nucleoid-associated protein Atu0095 from Agrobacterium fabrum (strain C58 / ATCC 33970) (Agrobacterium tumefaciens (strain C58)).